The primary structure comprises 741 residues: Phage T7 exclusion protein (741 aa).

In terms of domain architecture, KAP NTPase spans 27–334; that stretch reads FGNIAENISR…NSLIFLYPGM (308 aa).

In terms of biological role, responsible for the exclusion of phage T7 by plasmid F. Growth of bacteriophage T7 is inhibited in cells of E.coli that carries the plasmid F. This Escherichia coli (strain K12) protein is Phage T7 exclusion protein (pifA).